The chain runs to 188 residues: Elongation factor P (188 aa).

It belongs to the elongation factor P family.

The protein localises to the cytoplasm. It functions in the pathway protein biosynthesis; polypeptide chain elongation. In terms of biological role, involved in peptide bond synthesis. Stimulates efficient translation and peptide-bond synthesis on native or reconstituted 70S ribosomes in vitro. Probably functions indirectly by altering the affinity of the ribosome for aminoacyl-tRNA, thus increasing their reactivity as acceptors for peptidyl transferase. This chain is Elongation factor P, found in Gemmatimonas aurantiaca (strain DSM 14586 / JCM 11422 / NBRC 100505 / T-27).